A 355-amino-acid polypeptide reads, in one-letter code: Sesquiterpene synthase-like protein Agr11 (355 aa).

It belongs to the terpene synthase family.

The protein is Sesquiterpene synthase-like protein Agr11 of Cyclocybe aegerita (Black poplar mushroom).